The sequence spans 157 residues: DNA gyrase inhibitor (157 aa).

This sequence belongs to the DNA gyrase inhibitor family. In terms of assembly, interacts with DNA gyrase.

Its subcellular location is the cytoplasm. Its function is as follows. Inhibits the supercoiling activity of DNA gyrase. Acts by inhibiting DNA gyrase at an early step, prior to (or at the step of) binding of DNA by the gyrase. It protects cells against toxins that target DNA gyrase, by inhibiting activity of these toxins and reducing the formation of lethal double-strand breaks in the cell. This chain is DNA gyrase inhibitor, found in Cronobacter sakazakii (strain ATCC BAA-894) (Enterobacter sakazakii).